The chain runs to 78 residues: Delta-conotoxin-like CVIE (78 aa).

A signal peptide spans 1 to 22; that stretch reads MKLTCMMIVAVLFLTAWTFVTA. A propeptide spanning residues 23 to 49 is cleaved from the precursor; the sequence is DDSRNGLKNLFPKARHEMKNPEASKLN. 3 disulfide bridges follow: Cys-54–Cys-69, Cys-61–Cys-73, and Cys-68–Cys-77. Pro-65 is modified (4-hydroxyproline).

This sequence belongs to the conotoxin O1 superfamily. In terms of tissue distribution, expressed by the venom duct.

It localises to the secreted. Delta-conotoxins bind to site 6 of voltage-gated sodium channels (Nav) and inhibit the inactivation process. In Conus catus (Cat cone), this protein is Delta-conotoxin-like CVIE.